We begin with the raw amino-acid sequence, 201 residues long: MPGIFFSHANALKEVDNKPDEVMAQKKKNFAVDLKNYLKSMLPHLETMKSSSSTSSSDSEKNKLTPDEIIQWTMSLEKLLISEDGQSVFREFLKSEFSEENIEFWLACEDYKATNDSEELRCKANVIYQEFIQPNANKQINIDFSTRNSVTKDLLEPTITTFNDAQKMIFILMERDSYPRFLKSEIFLRLAERHHGNNVRG.

The RGS domain occupies 75-191 (SLEKLLISED…LKSEIFLRLA (117 aa)).

It is found in the cell membrane. It localises to the cytoplasm. The protein localises to the cytosol. Its function is as follows. Regulates G protein-coupled receptor signaling cascades, including signaling downstream of the N-formylpeptide chemoattractant receptors and leukotriene receptors. Inhibits B cell chemotaxis. Inhibits signal transduction by increasing the GTPase activity of G protein alpha subunits, thereby driving them into their inactive GDP-bound form. This Xenopus tropicalis (Western clawed frog) protein is Regulator of G-protein signaling 1 (rgs1).